We begin with the raw amino-acid sequence, 255 residues long: NAD kinase (255 aa).

Asp44 serves as the catalytic Proton acceptor. NAD(+) is bound by residues 44 to 45 (DG), His49, 114 to 115 (NE), Asp144, Ala152, 155 to 160 (SAYNLS), and Gln216.

This sequence belongs to the NAD kinase family. A divalent metal cation serves as cofactor.

The protein localises to the cytoplasm. It catalyses the reaction NAD(+) + ATP = ADP + NADP(+) + H(+). In terms of biological role, involved in the regulation of the intracellular balance of NAD and NADP, and is a key enzyme in the biosynthesis of NADP. Catalyzes specifically the phosphorylation on 2'-hydroxyl of the adenosine moiety of NAD to yield NADP. The chain is NAD kinase from Rickettsia bellii (strain OSU 85-389).